Reading from the N-terminus, the 186-residue chain is Peptidyl-tRNA hydrolase (186 aa).

A tRNA-binding site is contributed by Tyr13. His18 functions as the Proton acceptor in the catalytic mechanism. The tRNA site is built by Tyr59, Asn61, and Asn107.

The protein belongs to the PTH family. As to quaternary structure, monomer.

It localises to the cytoplasm. It catalyses the reaction an N-acyl-L-alpha-aminoacyl-tRNA + H2O = an N-acyl-L-amino acid + a tRNA + H(+). Hydrolyzes ribosome-free peptidyl-tRNAs (with 1 or more amino acids incorporated), which drop off the ribosome during protein synthesis, or as a result of ribosome stalling. Functionally, catalyzes the release of premature peptidyl moieties from peptidyl-tRNA molecules trapped in stalled 50S ribosomal subunits, and thus maintains levels of free tRNAs and 50S ribosomes. The chain is Peptidyl-tRNA hydrolase from Thermotoga petrophila (strain ATCC BAA-488 / DSM 13995 / JCM 10881 / RKU-1).